We begin with the raw amino-acid sequence, 238 residues long: Sugar fermentation stimulation protein homolog (238 aa).

Belongs to the SfsA family.

In Pseudomonas entomophila (strain L48), this protein is Sugar fermentation stimulation protein homolog.